Consider the following 347-residue polypeptide: NADH-ubiquinone oxidoreductase chain 2 (347 aa).

The next 9 membrane-spanning stretches (helical) occupy residues 3 to 23 (PPILIIIMFTVISGTIMVLMS), 25 to 45 (HWLMIWIGFEMNMLAIIPILM), 67 to 87 (SMLLMLGIIMNLLLTGQWAVL), 150 to 170 (NPHLLMTMALMSVLVGGWGGL), 178 to 198 (ILAYSSIAHMGWMIAVMTYSP), 201 to 221 (MLLNLSIYITMTLGTFMLFMF), 237 to 257 (LPLITSLILIIMLSLGGLPPL), 274 to 294 (NMIITTMLMTITALLNLYFYM), and 323 to 343 (MTMLPPLIVISTMLLPLTPMM).

Belongs to the complex I subunit 2 family. Core subunit of respiratory chain NADH dehydrogenase (Complex I) which is composed of 45 different subunits. Interacts with TMEM242.

It localises to the mitochondrion inner membrane. It catalyses the reaction a ubiquinone + NADH + 5 H(+)(in) = a ubiquinol + NAD(+) + 4 H(+)(out). Core subunit of the mitochondrial membrane respiratory chain NADH dehydrogenase (Complex I) which catalyzes electron transfer from NADH through the respiratory chain, using ubiquinone as an electron acceptor. Essential for the catalytic activity and assembly of complex I. The sequence is that of NADH-ubiquinone oxidoreductase chain 2 from Mustela kathiah (Yellow-bellied weasel).